A 596-amino-acid polypeptide reads, in one-letter code: Aspartate--tRNA(Asp/Asn) ligase (596 aa).

E175 is a binding site for L-aspartate. An aspartate region spans residues Q199–K202. Residues R221 and H454 each coordinate L-aspartate. R221–E223 contributes to the ATP binding site. E488 contributes to the ATP binding site. An L-aspartate-binding site is contributed by R495. G540 to R543 lines the ATP pocket.

Belongs to the class-II aminoacyl-tRNA synthetase family. Type 1 subfamily. In terms of assembly, homodimer.

Its subcellular location is the cytoplasm. It carries out the reaction tRNA(Asx) + L-aspartate + ATP = L-aspartyl-tRNA(Asx) + AMP + diphosphate. Functionally, aspartyl-tRNA synthetase with relaxed tRNA specificity since it is able to aspartylate not only its cognate tRNA(Asp) but also tRNA(Asn). Reaction proceeds in two steps: L-aspartate is first activated by ATP to form Asp-AMP and then transferred to the acceptor end of tRNA(Asp/Asn). The sequence is that of Aspartate--tRNA(Asp/Asn) ligase from Mesorhizobium japonicum (strain LMG 29417 / CECT 9101 / MAFF 303099) (Mesorhizobium loti (strain MAFF 303099)).